A 233-amino-acid polypeptide reads, in one-letter code: NAD-dependent protein deacylase (233 aa).

The Deacetylase sirtuin-type domain occupies 1–230; it reads MKNIMILSGA…ALDIENFMKD (230 aa). 9–28 lines the NAD(+) pocket; the sequence is GAGLSAPSGLKTFRDNDGLW. 2 residues coordinate substrate: tyrosine 53 and arginine 56. 88 to 91 is an NAD(+) binding site; sequence QNVD. Catalysis depends on histidine 106, which acts as the Proton acceptor. Zn(2+) is bound by residues cysteine 114, cysteine 117, cysteine 133, and cysteine 136. NAD(+) contacts are provided by residues 172–174 and 200–202; these read GTS and NLE.

This sequence belongs to the sirtuin family. Class III subfamily. Requires Zn(2+) as cofactor.

The protein resides in the cytoplasm. It carries out the reaction N(6)-acetyl-L-lysyl-[protein] + NAD(+) + H2O = 2''-O-acetyl-ADP-D-ribose + nicotinamide + L-lysyl-[protein]. The catalysed reaction is N(6)-succinyl-L-lysyl-[protein] + NAD(+) + H2O = 2''-O-succinyl-ADP-D-ribose + nicotinamide + L-lysyl-[protein]. In terms of biological role, NAD-dependent lysine deacetylase and desuccinylase that specifically removes acetyl and succinyl groups on target proteins. Modulates the activities of several proteins which are inactive in their acylated form. The chain is NAD-dependent protein deacylase from Campylobacter jejuni subsp. jejuni serotype O:2 (strain ATCC 700819 / NCTC 11168).